The following is a 126-amino-acid chain: MDMNQLFMQSIANSRGLCHPDCEKANNEREDYDASQHAAMVAVNLISSARVILKLDAVYTEYSAQYLVDNAGKEDNQGEMDQQSSQLTLQNLLQYMDENVWNKKEDVQGEREQPLTVKDCLECAFK.

This sequence belongs to the heat induced plant HTT protein family. As to expression, expressed in seedlings, leaves, stems, inflorescences and siliques.

Its subcellular location is the cytoplasm. It is found in the nucleus. In terms of biological role, mediates both basal and acquired thermotolerance. In Arabidopsis thaliana (Mouse-ear cress), this protein is Protein HEAT-INDUCED TAS1 TARGET 3.